The following is a 143-amino-acid chain: Small ribosomal subunit protein uS12 (143 aa).

Pro62 carries the hydroxyproline modification.

This sequence belongs to the universal ribosomal protein uS12 family. In terms of assembly, component of the 40S small ribosomal subunit.

It localises to the cytoplasm. It is found in the cytosol. Its subcellular location is the rough endoplasmic reticulum. This chain is Small ribosomal subunit protein uS12 (rps-23), found in Caenorhabditis elegans.